A 112-amino-acid chain; its full sequence is Large ribosomal subunit protein uL22 (112 aa).

This sequence belongs to the universal ribosomal protein uL22 family. As to quaternary structure, part of the 50S ribosomal subunit.

Its function is as follows. This protein binds specifically to 23S rRNA; its binding is stimulated by other ribosomal proteins, e.g. L4, L17, and L20. It is important during the early stages of 50S assembly. It makes multiple contacts with different domains of the 23S rRNA in the assembled 50S subunit and ribosome. Functionally, the globular domain of the protein is located near the polypeptide exit tunnel on the outside of the subunit, while an extended beta-hairpin is found that lines the wall of the exit tunnel in the center of the 70S ribosome. In Desulfovibrio desulfuricans (strain ATCC 27774 / DSM 6949 / MB), this protein is Large ribosomal subunit protein uL22.